We begin with the raw amino-acid sequence, 79 residues long: Sec-independent protein translocase protein TatA (79 aa).

Residues M1–G21 traverse the membrane as a helical segment. The interval D52–S79 is disordered. Positions N56–S79 are enriched in polar residues.

The protein belongs to the TatA/E family. In terms of assembly, the Tat system comprises two distinct complexes: a TatABC complex, containing multiple copies of TatA, TatB and TatC subunits, and a separate TatA complex, containing only TatA subunits. Substrates initially bind to the TatABC complex, which probably triggers association of the separate TatA complex to form the active translocon.

It is found in the cell inner membrane. Part of the twin-arginine translocation (Tat) system that transports large folded proteins containing a characteristic twin-arginine motif in their signal peptide across membranes. TatA could form the protein-conducting channel of the Tat system. This is Sec-independent protein translocase protein TatA from Bdellovibrio bacteriovorus (strain ATCC 15356 / DSM 50701 / NCIMB 9529 / HD100).